The following is a 73-amino-acid chain: Translation initiation factor IF-1 (73 aa).

One can recognise an S1-like domain in the interval 1-73; it reads MAKKDGAIEV…SRGRIVYRYK (73 aa).

This sequence belongs to the IF-1 family. As to quaternary structure, component of the 30S ribosomal translation pre-initiation complex which assembles on the 30S ribosome in the order IF-2 and IF-3, IF-1 and N-formylmethionyl-tRNA(fMet); mRNA recruitment can occur at any time during PIC assembly.

It is found in the cytoplasm. Its function is as follows. One of the essential components for the initiation of protein synthesis. Stabilizes the binding of IF-2 and IF-3 on the 30S subunit to which N-formylmethionyl-tRNA(fMet) subsequently binds. Helps modulate mRNA selection, yielding the 30S pre-initiation complex (PIC). Upon addition of the 50S ribosomal subunit IF-1, IF-2 and IF-3 are released leaving the mature 70S translation initiation complex. This chain is Translation initiation factor IF-1, found in Mycobacterium avium (strain 104).